A 319-amino-acid polypeptide reads, in one-letter code: Ornithine carbamoyltransferase (319 aa).

Residues 55 to 58 (STRT), Gln-82, Arg-106, and 133 to 136 (HPCQ) contribute to the carbamoyl phosphate site. L-ornithine is bound by residues Asn-171, Asp-234, and 238 to 239 (SM). Carbamoyl phosphate-binding positions include 274–275 (CL) and Arg-302.

This sequence belongs to the aspartate/ornithine carbamoyltransferase superfamily. OTCase family.

The protein localises to the cytoplasm. The catalysed reaction is carbamoyl phosphate + L-ornithine = L-citrulline + phosphate + H(+). The protein operates within amino-acid biosynthesis; L-arginine biosynthesis; L-arginine from L-ornithine and carbamoyl phosphate: step 1/3. Reversibly catalyzes the transfer of the carbamoyl group from carbamoyl phosphate (CP) to the N(epsilon) atom of ornithine (ORN) to produce L-citrulline. The polypeptide is Ornithine carbamoyltransferase (argF) (Corynebacterium glutamicum (strain ATCC 13032 / DSM 20300 / JCM 1318 / BCRC 11384 / CCUG 27702 / LMG 3730 / NBRC 12168 / NCIMB 10025 / NRRL B-2784 / 534)).